A 76-amino-acid polypeptide reads, in one-letter code: uncharacterized protein (76 aa).

The N-terminal stretch at M1–G15 is a signal peptide.

This is an uncharacterized protein from Magallana gigas (Pacific oyster).